Reading from the N-terminus, the 56-residue chain is MSHESVWNSRPRTYGKGSRSCRVCTHSAGLIRKYGLNICRQCFREKANDIGFTKHR.

Zn(2+)-binding residues include Cys21, Cys24, Cys39, and Cys42.

It belongs to the universal ribosomal protein uS14 family. As to quaternary structure, component of the small ribosomal subunit (SSU). Mature N.crassa ribosomes consist of a small (40S) and a large (60S) subunit. The 40S small subunit contains 1 molecule of ribosomal RNA (18S rRNA) and at least 32 different proteins. The large 60S subunit contains 3 rRNA molecules (26S, 5.8S and 5S rRNA) and at least 42 different proteins. Zn(2+) serves as cofactor.

It is found in the cytoplasm. Its function is as follows. Component of the ribosome, a large ribonucleoprotein complex responsible for the synthesis of proteins in the cell. The small ribosomal subunit (SSU) binds messenger RNAs (mRNAs) and translates the encoded message by selecting cognate aminoacyl-transfer RNA (tRNA) molecules. The large subunit (LSU) contains the ribosomal catalytic site termed the peptidyl transferase center (PTC), which catalyzes the formation of peptide bonds, thereby polymerizing the amino acids delivered by tRNAs into a polypeptide chain. The nascent polypeptides leave the ribosome through a tunnel in the LSU and interact with protein factors that function in enzymatic processing, targeting, and the membrane insertion of nascent chains at the exit of the ribosomal tunnel. This Neurospora crassa (strain ATCC 24698 / 74-OR23-1A / CBS 708.71 / DSM 1257 / FGSC 987) protein is Small ribosomal subunit protein uS14 (rps-29).